The following is a 386-amino-acid chain: S-adenosylmethionine synthase (386 aa).

His-16 is an ATP binding site. Asp-18 provides a ligand contact to Mg(2+). Residue Glu-44 participates in K(+) binding. L-methionine is bound by residues Glu-57 and Gln-100. A flexible loop region spans residues 100 to 110 (QSPDINQGVDQ). ATP contacts are provided by residues 164-166 (DGK), 230-231 (RF), Asp-239, 245-246 (RK), Ala-262, and Lys-266. Asp-239 is an L-methionine binding site. L-methionine is bound at residue Lys-270.

Belongs to the AdoMet synthase family. Homotetramer; dimer of dimers. It depends on Mg(2+) as a cofactor. K(+) serves as cofactor.

It localises to the cytoplasm. The catalysed reaction is L-methionine + ATP + H2O = S-adenosyl-L-methionine + phosphate + diphosphate. It functions in the pathway amino-acid biosynthesis; S-adenosyl-L-methionine biosynthesis; S-adenosyl-L-methionine from L-methionine: step 1/1. In terms of biological role, catalyzes the formation of S-adenosylmethionine (AdoMet) from methionine and ATP. The overall synthetic reaction is composed of two sequential steps, AdoMet formation and the subsequent tripolyphosphate hydrolysis which occurs prior to release of AdoMet from the enzyme. This is S-adenosylmethionine synthase from Nitratiruptor sp. (strain SB155-2).